Reading from the N-terminus, the 298-residue chain is NFU1 iron-sulfur cluster scaffold homolog, mitochondrial (298 aa).

The tract at residues 194–262 (IKELLDTRIR…IPEVESVEQV (69 aa)) is nifU. The [4Fe-4S] cluster site is built by cysteine 231 and cysteine 234.

The protein belongs to the NifU family.

Its subcellular location is the mitochondrion. Its function is as follows. Molecular scaffold for [Fe-S] cluster assembly of mitochondrial iron-sulfur proteins. The sequence is that of NFU1 iron-sulfur cluster scaffold homolog, mitochondrial from Drosophila grimshawi (Hawaiian fruit fly).